The following is a 247-amino-acid chain: MTAIDLNADLGEGCDTDEALLALVSSANIACGWHAGDVNTMRQTVGWALRQGVSIGAHPSFPDRENFGRTEMHLQPDEIYAGVLFQIGGLSAIVRAQGGKLAHVKAHGALYNQASRDRPLAMAIVHAIRDFDPSLVVFGLAGGELVKAARELGLQAKEEVFADRGYNADGSLVKRGTPGALIDSEDAALDQTLTMVREQRVKAIDGTWVPIRAETVCLHGDGAHALAFARRIRERLGSEGIAVRAGA.

This sequence belongs to the LamB/PxpA family. Forms a complex composed of PxpA, PxpB and PxpC.

It carries out the reaction 5-oxo-L-proline + ATP + 2 H2O = L-glutamate + ADP + phosphate + H(+). Functionally, catalyzes the cleavage of 5-oxoproline to form L-glutamate coupled to the hydrolysis of ATP to ADP and inorganic phosphate. The sequence is that of 5-oxoprolinase subunit A from Ralstonia pickettii (strain 12J).